Consider the following 72-residue polypeptide: ATP synthase subunit L (72 aa).

F-type ATP synthases have 2 components, the catalytic core F(1) and the membrane-embedded component F(0), linked together by a central stalk and a peripheral stalk. The central stalk, also called rotor shaft, is often seen as part of F(1). The peripheral stalk is seen as part of F(0). F(0) contains the membrane channel next to the rotor. F-type ATP synthases form dimers but each monomer functions independently in ATP generation. The dimer consists of 18 different polypeptides: ATP1 (subunit alpha, part of F(1), 3 molecules per monomer), ATP2 (subunit beta, part of F(1), 3 molecules per monomer), ATP3 (subunit gamma, part of the central stalk), ATP4 (subunit b, part of the peripheral stalk), ATP5/OSCP (subunit 5/OSCP, part of the peripheral stalk), ATP6 (subunit a, part of the peripheral stalk), ATP7 (subunit d, part of the peripheral stalk), ATP8 (subunit 8, part of the peripheral stalk), OLI1 (subunit c, part of the rotor, 10 molecules per monomer), ATP14 (subunit h, part of the peripheral stalk), ATP15 (subunit epsilon, part of the central stalk), ATP16 (subunit delta, part of the central stalk), ATP17 (subunit f, part of the peripheral stalk), ATP18 (subunit i/j, part of the peripheral stalk). Dimer-specific subunits are ATP19 (subunit k, at interface between monomers), ATP20 (subunit g, at interface between monomers), TIM11 (subunit e, at interface between monomers). Also contains subunit L.

The protein localises to the mitochondrion inner membrane. Its function is as follows. Mitochondrial membrane ATP synthase (F(1)F(0) ATP synthase or Complex V) produces ATP from ADP in the presence of a proton gradient across the membrane which is generated by electron transport complexes of the respiratory chain. F-type ATP synthases consist of two structural domains, F(1) - containing the extramembraneous catalytic core, and F(0) - containing the membrane proton channel, linked together by a central stalk and a peripheral stalk. During catalysis, ATP synthesis in the catalytic domain of F(1) is coupled via a rotary mechanism of the central stalk subunits to proton translocation. The protein is ATP synthase subunit L of Pichia angusta (Yeast).